The chain runs to 273 residues: Probable membrane transporter protein YunE (273 aa).

Helical transmembrane passes span 3–23, 50–70, 81–101, 105–125, 157–177, 185–205, 222–242, and 251–271; these read FVILVVLGLIAGTVGSLIGLG, AIGTSLLVIIFTGLSSTLAYI, LIFFIGSGPGSMIGAYVSKLF, SFSVWFGIFMILISLSLMLKA, VGIAIAFVVGFLGGLFGIGGG, MLLFLFPPKVAVATSMFIIFL, WLYALALVPGAWFGGKLGAAI, and IVMIMRIVLILIGCQLIYEGI.

The protein belongs to the 4-toluene sulfonate uptake permease (TSUP) (TC 2.A.102) family.

It is found in the cell membrane. This Bacillus subtilis (strain 168) protein is Probable membrane transporter protein YunE (yunE).